Here is a 291-residue protein sequence, read N- to C-terminus: Elongation factor Ts (291 aa).

Residues 80-83 (TDFV) are involved in Mg(2+) ion dislocation from EF-Tu.

It belongs to the EF-Ts family.

It is found in the cytoplasm. Associates with the EF-Tu.GDP complex and induces the exchange of GDP to GTP. It remains bound to the aminoacyl-tRNA.EF-Tu.GTP complex up to the GTP hydrolysis stage on the ribosome. The protein is Elongation factor Ts of Acinetobacter baumannii (strain AB307-0294).